The chain runs to 118 residues: Small ribosomal subunit protein uS13 (118 aa).

The tract at residues K93 to K118 is disordered.

The protein belongs to the universal ribosomal protein uS13 family. In terms of assembly, part of the 30S ribosomal subunit. Forms a loose heterodimer with protein S19. Forms two bridges to the 50S subunit in the 70S ribosome.

Located at the top of the head of the 30S subunit, it contacts several helices of the 16S rRNA. In the 70S ribosome it contacts the 23S rRNA (bridge B1a) and protein L5 of the 50S subunit (bridge B1b), connecting the 2 subunits; these bridges are implicated in subunit movement. Contacts the tRNAs in the A and P-sites. The protein is Small ribosomal subunit protein uS13 of Ectopseudomonas mendocina (strain ymp) (Pseudomonas mendocina).